Consider the following 511-residue polypeptide: MSGVWGAGGPRCQAALAVLASLCRARPPPLGLDVETCRSFELQSPEQSPSAADSGTSVSLLAVVVIVCGVALVAVFLFLFWKLCWMPWRKKEASSPSSANPASETLQSPSSRGNMADKLKDPSALGFLEAAVKISHTSPDIPAEVQMSVKEHIMRHTKLQRQTTEPASSTRHTSFKRHLPRQMHVSSVDYGNELPPAAAEQPTSIGRIKPELYKQKSVDGDDAKSEAAKSCGKINFSLRYDYESETLIVRILKAFDLPAKDFCGSSDPYVKIYLLPDRKCKLQTRVHRKTLNPTFDENFHFPVPYEELADRKLHLSVFDFDRFSRHDMIGEVILDNLFEASDLSRETSIWKDIQYATSESVDLGEIMFSLCYLPTAGRLTLTVIKCRNLKAMDITGYSDPYVKVSLLCDGRRLKKKKTTIKKNTLNPIYNEAIIFDIPPENMDQVSLLISVMDYDRVGHNEIIGVCRVGINAEGLGRDHWNEMLAYPRKPIAHWHSLVEVKKSFKEGTPRL.

The Vesicular portion of the chain corresponds to 1–59 (MSGVWGAGGPRCQAALAVLASLCRARPPPLGLDVETCRSFELQSPEQSPSAADSGTSVS). The tract at residues 12 to 38 (CQAALAVLASLCRARPPPLGLDVETCR) is cysteine motif. A helical transmembrane segment spans residues 60–80 (LLAVVVIVCGVALVAVFLFLF). The Cytoplasmic portion of the chain corresponds to 81-511 (WKLCWMPWRK…KSFKEGTPRL (431 aa)). 2 disordered regions span residues 92 to 119 (EASSPSSANPASETLQSPSSRGNMADKL) and 157 to 182 (TKLQRQTTEPASSTRHTSFKRHLPRQ). Residues 94-103 (SSPSSANPAS) show a composition bias toward low complexity. Composition is skewed to polar residues over residues 104 to 113 (ETLQSPSSRG) and 160 to 172 (QRQTTEPASSTRH). Ser-217 bears the Phosphoserine mark. 2 consecutive C2 domains span residues 230 to 351 (SCGK…SIWK) and 362 to 495 (DLGE…AHWH). Ca(2+) contacts are provided by Asp-261, Asp-267, Asp-319, Phe-320, Asp-321, Ser-324, Asp-327, Asp-393, Asp-399, Asp-453, and Asp-455. The interval 483–511 (MLAYPRKPIAHWHSLVEVKKSFKEGTPRL) is necessary for cell membrane association (isoform 2).

The protein belongs to the synaptotagmin family. Isoform 1: Homodimer; disulfide-linked via the cysteine motif. Isoform 1: Can also form heterodimers with SYT3, SYT7, SYT9 and SYT10. Isoform 1: Interacts with STX1A, STX1B and STX2; the interaction is Ca(2+)-dependent. Isoform 2: Is not able to form homodimer and heterodimers. Requires Ca(2+) as cofactor. Isoform 1 is expressed in the olfactory bulb. Isoform 2 is expressed in the brain (at protein level).

The protein resides in the cytoplasmic vesicle. The protein localises to the secretory vesicle. It localises to the synaptic vesicle membrane. Its subcellular location is the membrane. It is found in the cytoplasm. The protein resides in the cytosol. The protein localises to the cell membrane. In terms of biological role, may be involved in Ca(2+)-dependent exocytosis of secretory vesicles through Ca(2+) and phospholipid binding to the C2 domain or may serve as Ca(2+) sensors in the process of vesicular trafficking and exocytosis. May mediate Ca(2+)-regulation of exocytosis in acrosomal reaction in sperm. The polypeptide is Synaptotagmin-6 (Syt6) (Mus musculus (Mouse)).